Consider the following 402-residue polypeptide: MSDGEEKPDGFSFAGIAAGLKDSNKKDLALILAPENSICSGLFTQSIVRASCVDICEQRIKKSSGLIRAILINSGQANACTGDYGIQHTLFATKEVSQLLGINEEEVLMCSTGVIGIPIQIKNLIDNLPNLVKELKTNSLQNAAEAILTTDLVDKKITIETFIEGRKVKISGFAKGSGMIYPNMATMLAFLTCDVGVDKEEWDKMISIAVKKSFNAISVDGETSTNDAFIGINSGKKIDKKFLSKIQSGIDIVCQSLAKNIARDGEGANCLLEVLVEGAKSNSDAIKIAKSICNSSLVKTAINGCDPNWGRIISAAGNSGIDFKLDFLDLYIGDFQILKKGKLNKYDSKKVANYMQTRMNGKYLVEDIVSISLHLNSGSEKGTAWGCDLSKKYVEINSEYTT.

Residues threonine 149, lysine 175, threonine 186, glutamate 266, asparagine 397, and threonine 402 each contribute to the substrate site. Threonine 186 functions as the Nucleophile in the catalytic mechanism.

The protein belongs to the ArgJ family. In terms of assembly, heterotetramer of two alpha and two beta chains.

The protein resides in the cytoplasm. The catalysed reaction is N(2)-acetyl-L-ornithine + L-glutamate = N-acetyl-L-glutamate + L-ornithine. The enzyme catalyses L-glutamate + acetyl-CoA = N-acetyl-L-glutamate + CoA + H(+). The protein operates within amino-acid biosynthesis; L-arginine biosynthesis; L-ornithine and N-acetyl-L-glutamate from L-glutamate and N(2)-acetyl-L-ornithine (cyclic): step 1/1. It participates in amino-acid biosynthesis; L-arginine biosynthesis; N(2)-acetyl-L-ornithine from L-glutamate: step 1/4. Functionally, catalyzes two activities which are involved in the cyclic version of arginine biosynthesis: the synthesis of N-acetylglutamate from glutamate and acetyl-CoA as the acetyl donor, and of ornithine by transacetylation between N(2)-acetylornithine and glutamate. The polypeptide is Arginine biosynthesis bifunctional protein ArgJ (Prochlorococcus marinus subsp. pastoris (strain CCMP1986 / NIES-2087 / MED4)).